The sequence spans 951 residues: Bifunctional glutamine synthetase adenylyltransferase/adenylyl-removing enzyme (951 aa).

The interval 1-440 is adenylyl removase; it reads MLPLPSELQI…VFDDLIGDET (440 aa). An adenylyl transferase region spans residues 449–951; it reads HGLYKSLWQD…WLAANDANVS (503 aa).

It belongs to the GlnE family. Mg(2+) serves as cofactor.

It catalyses the reaction [glutamine synthetase]-O(4)-(5'-adenylyl)-L-tyrosine + phosphate = [glutamine synthetase]-L-tyrosine + ADP. It carries out the reaction [glutamine synthetase]-L-tyrosine + ATP = [glutamine synthetase]-O(4)-(5'-adenylyl)-L-tyrosine + diphosphate. Involved in the regulation of glutamine synthetase GlnA, a key enzyme in the process to assimilate ammonia. When cellular nitrogen levels are high, the C-terminal adenylyl transferase (AT) inactivates GlnA by covalent transfer of an adenylyl group from ATP to specific tyrosine residue of GlnA, thus reducing its activity. Conversely, when nitrogen levels are low, the N-terminal adenylyl removase (AR) activates GlnA by removing the adenylyl group by phosphorolysis, increasing its activity. The regulatory region of GlnE binds the signal transduction protein PII (GlnB) which indicates the nitrogen status of the cell. This Yersinia pestis bv. Antiqua (strain Antiqua) protein is Bifunctional glutamine synthetase adenylyltransferase/adenylyl-removing enzyme.